The primary structure comprises 62 residues: Large ribosomal subunit protein uL29 (62 aa).

It belongs to the universal ribosomal protein uL29 family.

In Syntrophotalea carbinolica (strain DSM 2380 / NBRC 103641 / GraBd1) (Pelobacter carbinolicus), this protein is Large ribosomal subunit protein uL29.